The following is a 274-amino-acid chain: Undecaprenyl-diphosphatase (274 aa).

6 consecutive transmembrane segments (helical) span residues 44-64 (AKVF…LVYW), 85-105 (LNVV…GKMI), 109-129 (LFIP…ILWA), 185-205 (ATDF…AYSL), 214-234 (VADI…AWLC), and 247-267 (FIPF…TAWT).

The protein belongs to the UppP family.

It localises to the cell inner membrane. It carries out the reaction di-trans,octa-cis-undecaprenyl diphosphate + H2O = di-trans,octa-cis-undecaprenyl phosphate + phosphate + H(+). In terms of biological role, catalyzes the dephosphorylation of undecaprenyl diphosphate (UPP). Confers resistance to bacitracin. The sequence is that of Undecaprenyl-diphosphatase from Variovorax paradoxus (strain S110).